We begin with the raw amino-acid sequence, 230 residues long: Large ribosomal subunit protein uL1 (230 aa).

It belongs to the universal ribosomal protein uL1 family. As to quaternary structure, part of the 50S ribosomal subunit.

Its function is as follows. Binds directly to 23S rRNA. The L1 stalk is quite mobile in the ribosome, and is involved in E site tRNA release. In terms of biological role, protein L1 is also a translational repressor protein, it controls the translation of the L11 operon by binding to its mRNA. This is Large ribosomal subunit protein uL1 from Rhodopseudomonas palustris (strain BisA53).